Consider the following 602-residue polypeptide: Elongation factor 4 (602 aa).

Residues 7 to 190 (KHIRNFCIVA…AVVQKVPAPS (184 aa)) form the tr-type G domain. Residues 19 to 24 (DHGKST) and 137 to 140 (NKID) contribute to the GTP site.

This sequence belongs to the TRAFAC class translation factor GTPase superfamily. Classic translation factor GTPase family. LepA subfamily.

It localises to the cell membrane. The enzyme catalyses GTP + H2O = GDP + phosphate + H(+). In terms of biological role, required for accurate and efficient protein synthesis under certain stress conditions. May act as a fidelity factor of the translation reaction, by catalyzing a one-codon backward translocation of tRNAs on improperly translocated ribosomes. Back-translocation proceeds from a post-translocation (POST) complex to a pre-translocation (PRE) complex, thus giving elongation factor G a second chance to translocate the tRNAs correctly. Binds to ribosomes in a GTP-dependent manner. This chain is Elongation factor 4, found in Clostridium acetobutylicum (strain ATCC 824 / DSM 792 / JCM 1419 / IAM 19013 / LMG 5710 / NBRC 13948 / NRRL B-527 / VKM B-1787 / 2291 / W).